The following is a 190-amino-acid chain: A-type ATP synthase subunit E (190 aa).

Belongs to the V-ATPase E subunit family. In terms of assembly, has multiple subunits with at least A(3), B(3), C, D, E, F, H, I and proteolipid K(x).

Its subcellular location is the cell membrane. Functionally, component of the A-type ATP synthase that produces ATP from ADP in the presence of a proton gradient across the membrane. The protein is A-type ATP synthase subunit E of Pyrobaculum neutrophilum (strain DSM 2338 / JCM 9278 / NBRC 100436 / V24Sta) (Thermoproteus neutrophilus).